Reading from the N-terminus, the 412-residue chain is Double C2-like domain-containing protein beta (412 aa).

Residues 1–36 are negatively regulates targeting to plasma membrane; it reads MTLRRRGEKATISIQEHMAIDVCPGPIRPIKQISDY. The tract at residues 1-90 is mediates interaction with DYNLT1; the sequence is MTLRRRGEKA…EDVDQLFGAY (90 aa). A disordered region spans residues 38–123; sequence PRFPRGLPPT…PDVDGYESDD (86 aa). A compositionally biased stretch (pro residues) spans 43–58; the sequence is GLPPTAAPRAPAPPDA. Over residues 59–74 the composition is skewed to low complexity; that stretch reads PARSPAASASPRSPSD. Over residues 95–108 the composition is skewed to pro residues; that stretch reads GPSPGPSPARPPAK. The span at 112-123 shows a compositional bias: acidic residues; sequence DEPDVDGYESDD. C2 domains follow at residues 126–250 and 266–399; these read ALGT…SICL and ERGR…ERWH. Ca(2+) contacts are provided by aspartate 157, aspartate 163, aspartate 218, aspartate 220, aspartate 297, aspartate 303, aspartate 357, aspartate 359, and aspartate 365. The interval 257–375 is mediates interaction with STXBP3; the sequence is DKAEDKSLEE…FIGGVVLGIN (119 aa). At serine 411 the chain carries Phosphoserine.

As to quaternary structure, interacts with cytoplasmic dynein light chain DYNLT1. May interact with UNC13A; the interaction mediates targeting to the plasma membrane. Probably interacts with the SNARE (soluble N-ethylmaleimide-sensitive factor attached protein receptor) complex composed of SNAP25, STX1A and VAMP2; the interaction is calcium-dependent and competitive with SYT1. Interacts with STX4; the interaction is calcium-dependent, increased by insulin and glucose, and mediates vesicle fusion with plasma membrane in pancreatic cells and adipocytes. Interacts with STXBP3; the interaction is direct, occurs at the cell membrane and regulates glucose-stimulated insulin secretion. Ca(2+) serves as cofactor. Widely expressed. Expressed in pancreatic islet cells (at protein level).

Its subcellular location is the cytoplasm. It localises to the cytoplasmic granule. The protein localises to the cell membrane. Its function is as follows. Calcium sensor which positively regulates SNARE-dependent fusion of vesicles with membranes. Binds phospholipids in a calcium-dependent manner and may act at the priming stage of fusion by modifying membrane curvature to stimulate fusion. Involved in calcium-triggered exocytosis in chromaffin cells and calcium-dependent spontaneous release of neurotransmitter in absence of action potentials in neuronal cells. Involved both in glucose-stimulated insulin secretion in pancreatic cells and insulin-dependent GLUT4 transport to the plasma membrane in adipocytes. In Mus musculus (Mouse), this protein is Double C2-like domain-containing protein beta (Doc2b).